We begin with the raw amino-acid sequence, 103 residues long: Small ribosomal subunit protein uS10 (103 aa).

Belongs to the universal ribosomal protein uS10 family. As to quaternary structure, part of the 30S ribosomal subunit.

Involved in the binding of tRNA to the ribosomes. The polypeptide is Small ribosomal subunit protein uS10 (Nitratiruptor sp. (strain SB155-2)).